Here is a 348-residue protein sequence, read N- to C-terminus: Small ribosomal subunit biogenesis GTPase RsgA (348 aa).

The tract at residues 1–32 is disordered; it reads MAKQKLTQNQKRRIHSNNAKALDRHRRQTKKQ. Residues 106-274 enclose the CP-type G domain; that stretch reads KNELSRPDYY…LIDSPGIREF (169 aa). GTP-binding positions include 162–165 and 216–224; these read NKID and GQSGVGKSS. 4 residues coordinate Zn(2+): C298, C303, H305, and C311.

Belongs to the TRAFAC class YlqF/YawG GTPase family. RsgA subfamily. In terms of assembly, monomer. Associates with 30S ribosomal subunit, binds 16S rRNA. Zn(2+) serves as cofactor.

The protein localises to the cytoplasm. Functionally, one of several proteins that assist in the late maturation steps of the functional core of the 30S ribosomal subunit. Helps release RbfA from mature subunits. May play a role in the assembly of ribosomal proteins into the subunit. Circularly permuted GTPase that catalyzes slow GTP hydrolysis, GTPase activity is stimulated by the 30S ribosomal subunit. This is Small ribosomal subunit biogenesis GTPase RsgA from Actinobacillus succinogenes (strain ATCC 55618 / DSM 22257 / CCUG 43843 / 130Z).